The chain runs to 144 residues: Probable transcription termination protein NusA (144 aa).

The KH domain occupies 101 to 144; that stretch reads RTDIVVGVKPEEIGKVIGKEGKNIKLFKDAVSRYFNVNSISVKQ.

It belongs to the NusA family.

It localises to the cytoplasm. In terms of biological role, participates in transcription termination. The chain is Probable transcription termination protein NusA from Thermoplasma acidophilum (strain ATCC 25905 / DSM 1728 / JCM 9062 / NBRC 15155 / AMRC-C165).